Consider the following 295-residue polypeptide: Alpha-1A adrenergic receptor (295 aa).

Residues 1-27 lie on the Extracellular side of the membrane; it reads MVFLSGNASDSSNCTHPPAPVNISKAI. N-linked (GlcNAc...) asparagine glycans are attached at residues N7, N13, and N22. The chain crosses the membrane as a helical span at residues 28 to 51; that stretch reads LLGVILGGLIIFGVLGNILVILSV. Over 52–64 the chain is Cytoplasmic; that stretch reads ACHRHLHSVTHYY. The helical transmembrane segment at 65–88 threads the bilayer; it reads IVNLAVADLLLTSTVLPFSAIFEI. The Extracellular segment spans residues 89-99; sequence LGYWAFGRVFC. Residues C99 and C176 are joined by a disulfide bond. The helical transmembrane segment at 100–122 threads the bilayer; that stretch reads NIWAAVDVLCCTASIMGLCIISI. Topologically, residues 123 to 143 are cytoplasmic; that stretch reads DRYIGVSYPLRYPTIVTQKRG. Residues 144-167 traverse the membrane as a helical segment; sequence LMALLCVWALSLVISIGPLFGWRQ. Residues 168 to 181 are Extracellular-facing; sequence PAPEDETICQITEE. Residues 182 to 205 form a helical membrane-spanning segment; it reads PGYVLFSALGSFYVPLTIILVMYC. At 206–273 the chain is on the cytoplasmic side; that stretch reads RVYVVAKRES…FSREKKAAKT (68 aa). Residue S215 is modified to Phosphoserine; by PKA. A helical membrane pass occupies residues 274–295; it reads LGIVVGCFVLCWLPFFLVMPIG.

It belongs to the G-protein coupled receptor 1 family. Adrenergic receptor subfamily. ADRA1A sub-subfamily. Homo- and heterooligomer. Heterooligomerizes with ADRA1B homooligomers in cardiac myocytes. Interacts with CAVIN4.

It localises to the nucleus membrane. The protein resides in the cell membrane. The protein localises to the cytoplasm. Its subcellular location is the membrane. It is found in the caveola. Its function is as follows. This alpha-adrenergic receptor mediates its action by association with G proteins that activate a phosphatidylinositol-calcium second messenger system. Its effect is mediated by G(q) and G(11) proteins. Nuclear ADRA1A-ADRA1B heterooligomers regulate phenylephrine (PE)-stimulated ERK signaling in cardiac myocytes. The sequence is that of Alpha-1A adrenergic receptor (ADRA1A) from Canis lupus familiaris (Dog).